A 332-amino-acid polypeptide reads, in one-letter code: Nucleoid-associated protein VVA0877 (332 aa).

It belongs to the YejK family.

It is found in the cytoplasm. The protein localises to the nucleoid. The chain is Nucleoid-associated protein VVA0877 from Vibrio vulnificus (strain YJ016).